Here is a 372-residue protein sequence, read N- to C-terminus: N-methyl-L-tryptophan oxidase (372 aa).

4-34 lines the FAD pocket; that stretch reads DLIIIGSGSVGAAAGYYATRAGLNVLMTDAH. Position 308 is an S-8alpha-FAD cysteine (Cys-308).

This sequence belongs to the MSOX/MTOX family. MTOX subfamily. As to quaternary structure, monomer. The cofactor is FAD.

It catalyses the reaction N(alpha)-methyl-L-tryptophan + O2 + H2O = L-tryptophan + formaldehyde + H2O2. Its function is as follows. Catalyzes the oxidative demethylation of N-methyl-L-tryptophan. In Escherichia coli (strain K12 / DH10B), this protein is N-methyl-L-tryptophan oxidase.